The following is a 120-amino-acid chain: Response regulator receiver protein CpdR (120 aa).

Residues 3-117 (RILLAEDDND…DLVNEIEKML (115 aa)) enclose the Response regulatory domain. Asp52 carries the post-translational modification 4-aspartylphosphate.

Post-translationally, is phosphorylated by ChpT-P on Asp-52.

It is found in the cytoplasm. In terms of biological role, component of a regulatory phosphorelay system that controls B.abortus cell growth, division, and intracellular survival inside mammalian host cells. This signaling pathway is composed of CckA, ChpT, CtrA and CpdR. CpdR is a response regulator substrate of ChpT. Unphosphorylated CpdR controls steady-state levels of CtrA in the B.abortus cell, likely via CtrA destabilization and activation of its proteolysis. The protein is Response regulator receiver protein CpdR of Brucella abortus (strain 2308).